Consider the following 329-residue polypeptide: 4-hydroxythreonine-4-phosphate dehydrogenase (329 aa).

2 residues coordinate substrate: His136 and Thr137. Residues His166, His211, and His266 each coordinate a divalent metal cation. Positions 274, 283, and 292 each coordinate substrate.

Belongs to the PdxA family. In terms of assembly, homodimer. The cofactor is Zn(2+). It depends on Mg(2+) as a cofactor. Co(2+) serves as cofactor.

Its subcellular location is the cytoplasm. It carries out the reaction 4-(phosphooxy)-L-threonine + NAD(+) = 3-amino-2-oxopropyl phosphate + CO2 + NADH. It functions in the pathway cofactor biosynthesis; pyridoxine 5'-phosphate biosynthesis; pyridoxine 5'-phosphate from D-erythrose 4-phosphate: step 4/5. Functionally, catalyzes the NAD(P)-dependent oxidation of 4-(phosphooxy)-L-threonine (HTP) into 2-amino-3-oxo-4-(phosphooxy)butyric acid which spontaneously decarboxylates to form 3-amino-2-oxopropyl phosphate (AHAP). This is 4-hydroxythreonine-4-phosphate dehydrogenase from Shigella flexneri serotype 5b (strain 8401).